A 286-amino-acid polypeptide reads, in one-letter code: S-methyl-5'-thioadenosine phosphorylase (286 aa).

Phosphate-binding positions include serine 11, 53–54, and 86–87; these read RH and SA. Methionine 185 is a binding site for substrate. Threonine 186 lines the phosphate pocket. Residue 209-211 participates in substrate binding; sequence DYD.

The protein belongs to the PNP/MTAP phosphorylase family. MTAP subfamily. In terms of assembly, homohexamer. Dimer of a homotrimer.

The enzyme catalyses S-methyl-5'-thioadenosine + phosphate = 5-(methylsulfanyl)-alpha-D-ribose 1-phosphate + adenine. It participates in amino-acid biosynthesis; L-methionine biosynthesis via salvage pathway; S-methyl-5-thio-alpha-D-ribose 1-phosphate from S-methyl-5'-thioadenosine (phosphorylase route): step 1/1. Catalyzes the reversible phosphorylation of S-methyl-5'-thioadenosine (MTA) to adenine and 5-methylthioribose-1-phosphate. Involved in the breakdown of MTA, a major by-product of polyamine biosynthesis. Responsible for the first step in the methionine salvage pathway after MTA has been generated from S-adenosylmethionine. Has broad substrate specificity with 6-aminopurine nucleosides as preferred substrates. The polypeptide is S-methyl-5'-thioadenosine phosphorylase (Geobacter sulfurreducens (strain ATCC 51573 / DSM 12127 / PCA)).